The chain runs to 169 residues: ATP-dependent Clp protease adapter protein CLPS2, chloroplastic (169 aa).

Residues 1-33 (MLATRCKCNLPSRSFVAPARSVRTRALHVEGRF) constitute a chloroplast transit peptide. A disordered region spans residues 67–92 (DAKTDNGNNGSNTDKDKKSPPGGGNY).

Belongs to the ClpS family.

Its subcellular location is the plastid. It localises to the chloroplast stroma. Functionally, small adapter protein that modulate the activity of plastid Clp protease system (CLPC). Probably involved in substrate selection for plastid CLPC. The polypeptide is ATP-dependent Clp protease adapter protein CLPS2, chloroplastic (Chlamydomonas reinhardtii (Chlamydomonas smithii)).